The primary structure comprises 332 residues: Ferredoxin--NADP reductase 1 (332 aa).

FAD contacts are provided by D35, K43, F48, V88, F123, D284, and T325.

Belongs to the ferredoxin--NADP reductase type 2 family. Homodimer. FAD serves as cofactor.

The enzyme catalyses 2 reduced [2Fe-2S]-[ferredoxin] + NADP(+) + H(+) = 2 oxidized [2Fe-2S]-[ferredoxin] + NADPH. This Listeria monocytogenes serotype 4b (strain F2365) protein is Ferredoxin--NADP reductase 1.